A 164-amino-acid polypeptide reads, in one-letter code: Phosphopantetheine adenylyltransferase (164 aa).

Substrate is bound at residue serine 9. Residues 9–10 and histidine 17 each bind ATP; that span reads SF. Residues lysine 41, leucine 73, and arginine 87 each coordinate substrate. Residues 88-90, glutamate 98, and 123-129 contribute to the ATP site; these read GLR and YTFLSSS.

It belongs to the bacterial CoaD family. As to quaternary structure, homohexamer. Mg(2+) serves as cofactor.

The protein localises to the cytoplasm. It carries out the reaction (R)-4'-phosphopantetheine + ATP + H(+) = 3'-dephospho-CoA + diphosphate. The protein operates within cofactor biosynthesis; coenzyme A biosynthesis; CoA from (R)-pantothenate: step 4/5. In terms of biological role, reversibly transfers an adenylyl group from ATP to 4'-phosphopantetheine, yielding dephospho-CoA (dPCoA) and pyrophosphate. The polypeptide is Phosphopantetheine adenylyltransferase (Dictyoglomus thermophilum (strain ATCC 35947 / DSM 3960 / H-6-12)).